A 1837-amino-acid chain; its full sequence is Nucleoporin nup211 (1837 aa).

Coiled coils occupy residues 59–378, 415–519, and 559–625; these read EVNY…YDEI, YKQK…ELDL, and VFRN…QLRY. T650 bears the Phosphothreonine mark. Coiled coils occupy residues 661–1163, 1222–1637, and 1675–1712; these read EQTS…NKLL, LDNR…ENTH, and KAKI…PEKT. The tract at residues 1464–1521 is disordered; the sequence is KDSNHQLQESASSDAEQITKEQFEQLKSEKERTEKELADSKNELEHLQSEAVDADGKT. The segment covering 1468–1479 has biased composition (polar residues); sequence HQLQESASSDAE. Over residues 1480-1521 the composition is skewed to basic and acidic residues; that stretch reads QITKEQFEQLKSEKERTEKELADSKNELEHLQSEAVDADGKT. S1558 bears the Phosphoserine mark. A Phosphothreonine modification is found at T1560. Residue S1563 is modified to Phosphoserine. Disordered regions lie at residues 1602–1642 and 1700–1837; these read EKEK…NIDD and ENLN…KKAK. Over residues 1617–1628 the composition is skewed to basic and acidic residues; it reads KSQRIKELEEQA. Composition is skewed to polar residues over residues 1700 to 1730, 1753 to 1763, 1795 to 1814, and 1827 to 1837; these read ENLN…SKPT, KSLSARLQGTG, IATS…TAKS, and GGSSSNQKKAK.

The protein resides in the cytoplasm. The protein localises to the nucleus. Its function is as follows. Functions as a component of the nuclear pore complex (NPC). NPC components, collectively referred to as nucleoporins (NUPs), can play the role of both NPC structural components and of docking or interaction partners for transiently associated nuclear transport factors. Active directional transport is assured by both, a Phe-Gly (FG) repeat affinity gradient for these transport factors across the NPC and a transport cofactor concentration gradient across the nuclear envelope. The protein is Nucleoporin nup211 (nup211) of Schizosaccharomyces pombe (strain 972 / ATCC 24843) (Fission yeast).